The primary structure comprises 367 residues: Glutamate 5-kinase (367 aa).

ATP is bound at residue Lys-10. Substrate-binding residues include Ser-50, Asp-137, and Asn-149. ATP-binding positions include 169 to 170 (TD) and 211 to 217 (TGGMGTK). The region spanning 275–353 (AGEITVDEGA…QQIDAILGYE (79 aa)) is the PUA domain.

Belongs to the glutamate 5-kinase family.

The protein resides in the cytoplasm. The enzyme catalyses L-glutamate + ATP = L-glutamyl 5-phosphate + ADP. It participates in amino-acid biosynthesis; L-proline biosynthesis; L-glutamate 5-semialdehyde from L-glutamate: step 1/2. In terms of biological role, catalyzes the transfer of a phosphate group to glutamate to form L-glutamate 5-phosphate. This is Glutamate 5-kinase from Citrobacter koseri (strain ATCC BAA-895 / CDC 4225-83 / SGSC4696).